The following is an 873-amino-acid chain: Mitogen-activated protein kinase kinase kinase kinase 3 (873 aa).

At M1 the chain carries N-acetylmethionine. Residues 16-273 (FELIQRIGSG…AEKLLQHPFV (258 aa)) form the Protein kinase domain. Residues 22 to 30 (IGSGTYGDV) and K45 contribute to the ATP site. The Proton acceptor role is filled by D136. S329 and S377 each carry phosphoserine. Residues 389 to 518 (AHLEDDEGDD…KPISNGLPPT (130 aa)) form a disordered region. A compositionally biased stretch (pro residues) spans 452–466 (HVPPRPPPPRLPPQK). Over residues 487-499 (VHQQQSEQRGTNL) the composition is skewed to polar residues. The 312-residue stretch at 535–846 (PLKIHCATSW…IFRLLGSDRV (312 aa)) folds into the CNH domain.

The protein belongs to the protein kinase superfamily. STE Ser/Thr protein kinase family. STE20 subfamily. As to quaternary structure, interacts with SH3GL2. Interaction appears to regulate MAP4K3-mediated JNK activation. Requires Mg(2+) as cofactor.

The catalysed reaction is L-seryl-[protein] + ATP = O-phospho-L-seryl-[protein] + ADP + H(+). It carries out the reaction L-threonyl-[protein] + ATP = O-phospho-L-threonyl-[protein] + ADP + H(+). Functionally, serine/threonine kinase that plays a role in the response to environmental stress. Appears to act upstream of the JUN N-terminal pathway. Activator of the Hippo signaling pathway which plays a pivotal role in organ size control and tumor suppression by restricting proliferation and promoting apoptosis. MAP4Ks act in parallel to and are partially redundant with STK3/MST2 and STK4/MST2 in the phosphorylation and activation of LATS1/2, and establish MAP4Ks as components of the expanded Hippo pathway. The protein is Mitogen-activated protein kinase kinase kinase kinase 3 (Map4k3) of Rattus norvegicus (Rat).